We begin with the raw amino-acid sequence, 233 residues long: DNA repair protein RecO (233 aa).

The protein belongs to the RecO family.

Involved in DNA repair and RecF pathway recombination. In Francisella philomiragia subsp. philomiragia (strain ATCC 25017 / CCUG 19701 / FSC 153 / O#319-036), this protein is DNA repair protein RecO.